We begin with the raw amino-acid sequence, 373 residues long: tRNA-specific 2-thiouridylase MnmA (373 aa).

ATP-binding positions include 12 to 19 (GMSGGVDS) and M38. The segment at 98–100 (NPD) is interaction with target base in tRNA. The active-site Nucleophile is the C103. An intrachain disulfide couples C103 to C200. G127 serves as a coordination point for ATP. The interval 150–152 (KDQ) is interaction with tRNA. C200 (cysteine persulfide intermediate) is an active-site residue. Residues 312-313 (RY) form an interaction with tRNA region.

The protein belongs to the MnmA/TRMU family.

The protein localises to the cytoplasm. The enzyme catalyses S-sulfanyl-L-cysteinyl-[protein] + uridine(34) in tRNA + AH2 + ATP = 2-thiouridine(34) in tRNA + L-cysteinyl-[protein] + A + AMP + diphosphate + H(+). Its function is as follows. Catalyzes the 2-thiolation of uridine at the wobble position (U34) of tRNA, leading to the formation of s(2)U34. This chain is tRNA-specific 2-thiouridylase MnmA, found in Streptococcus pyogenes serotype M6 (strain ATCC BAA-946 / MGAS10394).